Consider the following 188-residue polypeptide: Ribosome-recycling factor (188 aa).

The protein belongs to the RRF family.

The protein localises to the cytoplasm. Functionally, responsible for the release of ribosomes from messenger RNA at the termination of protein biosynthesis. May increase the efficiency of translation by recycling ribosomes from one round of translation to another. This Gluconacetobacter diazotrophicus (strain ATCC 49037 / DSM 5601 / CCUG 37298 / CIP 103539 / LMG 7603 / PAl5) protein is Ribosome-recycling factor.